A 702-amino-acid polypeptide reads, in one-letter code: Polyribonucleotide nucleotidyltransferase (702 aa).

2 residues coordinate Mg(2+): Asp-491 and Asp-497. The KH domain occupies 558–618 (PKMKTFMIPV…TAIEKAYQLI (61 aa)). Residues 628–696 (GEKIIGPVVK…GKGKIKLQLI (69 aa)) enclose the S1 motif domain.

This sequence belongs to the polyribonucleotide nucleotidyltransferase family. The cofactor is Mg(2+).

The protein localises to the cytoplasm. It carries out the reaction RNA(n+1) + phosphate = RNA(n) + a ribonucleoside 5'-diphosphate. Functionally, involved in mRNA degradation. Catalyzes the phosphorolysis of single-stranded polyribonucleotides processively in the 3'- to 5'-direction. The polypeptide is Polyribonucleotide nucleotidyltransferase (Spiroplasma citri).